A 351-amino-acid chain; its full sequence is Large ribosomal subunit protein uL3 (351 aa).

2 disordered regions span residues methionine 1–threonine 31 and lysine 246–glycine 271.

Belongs to the universal ribosomal protein uL3 family. As to quaternary structure, part of the 50S ribosomal subunit. Forms a cluster with proteins L14 and L24e.

One of the primary rRNA binding proteins, it binds directly near the 3'-end of the 23S rRNA, where it nucleates assembly of the 50S subunit. The sequence is that of Large ribosomal subunit protein uL3 from Saccharolobus islandicus (strain Y.N.15.51 / Yellowstone #2) (Sulfolobus islandicus).